Consider the following 277-residue polypeptide: 4-hydroxy-tetrahydrodipicolinate reductase (277 aa).

Residues 11 to 16 (GALGRM) and 110 to 112 (GTT) contribute to the NAD(+) site. His166 (proton donor/acceptor) is an active-site residue. Residue His167 participates in (S)-2,3,4,5-tetrahydrodipicolinate binding. Lys170 functions as the Proton donor in the catalytic mechanism. A (S)-2,3,4,5-tetrahydrodipicolinate-binding site is contributed by 176 to 177 (GT).

It belongs to the DapB family.

Its subcellular location is the cytoplasm. It catalyses the reaction (S)-2,3,4,5-tetrahydrodipicolinate + NAD(+) + H2O = (2S,4S)-4-hydroxy-2,3,4,5-tetrahydrodipicolinate + NADH + H(+). It carries out the reaction (S)-2,3,4,5-tetrahydrodipicolinate + NADP(+) + H2O = (2S,4S)-4-hydroxy-2,3,4,5-tetrahydrodipicolinate + NADPH + H(+). The protein operates within amino-acid biosynthesis; L-lysine biosynthesis via DAP pathway; (S)-tetrahydrodipicolinate from L-aspartate: step 4/4. In terms of biological role, catalyzes the conversion of 4-hydroxy-tetrahydrodipicolinate (HTPA) to tetrahydrodipicolinate. The chain is 4-hydroxy-tetrahydrodipicolinate reductase from Synechococcus sp. (strain CC9605).